The following is a 481-amino-acid chain: Pentatricopeptide repeat-containing protein 8, mitochondrial (481 aa).

The transit peptide at 1-55 directs the protein to the mitochondrion; that stretch reads MQGFGSQIFRKLLRSSNAKVSDALLQNTRTLFTAPPLHSGLQTSFTAETQQHVRQ. PPR repeat units follow at residues 137–172 and 365–399; these read SARFWRIMLQSYIDLNLFDKASLIADMSLSHMEFLP and SISTANTLFSIASRLKDVKWLSAGFDMIDKYGLKP.

It localises to the mitochondrion. In terms of biological role, mitochondrial RNA-binding protein involved in mitochondrial translation. The cox1 mRNA is one target but it is not clear if ppr8 has a single or multiple targets. This chain is Pentatricopeptide repeat-containing protein 8, mitochondrial (ppr8), found in Schizosaccharomyces pombe (strain 972 / ATCC 24843) (Fission yeast).